Here is a 443-residue protein sequence, read N- to C-terminus: Trigger factor (443 aa).

The PPIase FKBP-type domain maps to 161 to 246 (GDKVVIDFQG…IKKIMEGKLP (86 aa)).

This sequence belongs to the FKBP-type PPIase family. Tig subfamily.

The protein localises to the cytoplasm. The catalysed reaction is [protein]-peptidylproline (omega=180) = [protein]-peptidylproline (omega=0). In terms of biological role, involved in protein export. Acts as a chaperone by maintaining the newly synthesized protein in an open conformation. Functions as a peptidyl-prolyl cis-trans isomerase. This Legionella pneumophila (strain Lens) protein is Trigger factor.